A 400-amino-acid chain; its full sequence is MLNVFFLTSLFYAASATTYVTTNNHIEMPIYQKRPLSEQMEMIDILDLGDRPRRQAEPNLHNSASKFLLEVYNEISEDQEPKEVLHQRHKRSLDDDILISNEDRQEIASCNSILTFSSRLKPEQLDNELDMHITFNTNDVPVDLSLVQAMLRIYKQPSLVDRRANFTVSVYRKLDNRQDFSYRILGSVNTTSSQRGWLEFNLTDTLRYWLHNKGLQRRNELRISIGDSQLSTFAAGLVTPQASRTSLEPFIVGYFNGPELLVKIQKLRFKRDLEKRRAGGGSPPPPPPPPVDLYRPPQSCERLNFTVDFKELHMHNWVIAPKKFEAYFCGGGCNFPLGTKMNATNHAIVQTLMHLKQPHLPKPCCVPTVLGAITILRYLNEDIIDLTKYQKAVAKECGCH.

Positions methionine 1–alanine 16 are cleaved as a signal peptide. Residues threonine 17–arginine 277 constitute a propeptide that is removed on maturation. N-linked (GlcNAc...) asparagine glycans are attached at residues asparagine 165, asparagine 189, asparagine 201, asparagine 304, and asparagine 342. 3 disulfide bridges follow: cysteine 300–cysteine 365, cysteine 329–cysteine 397, and cysteine 333–cysteine 399.

It belongs to the TGF-beta family. Heterodimers of scw/dpp are the active subunit, dpp/dpp homodimers elicit a basal response and scw/scw homodimers alone are ineffective in specifying a dorsal pattern. Ubiquitously expressed during early stages of embryogenesis, but the effect on development appears graded and is restricted to the dorsal side of the embryo.

The protein resides in the secreted. Part of the signal that specifies dorsal cell fates in the embryo. Acts together with dpp. This chain is Protein screw (scw), found in Drosophila melanogaster (Fruit fly).